The sequence spans 197 residues: Cytochrome c-L (197 aa).

Positions 1-25 (MMNRVKIGTALLGLTLAGIALPALA) are cleaved as a signal peptide. Heme c is bound by residues Cys-90, Cys-93, and His-94.

In terms of processing, binds 1 heme c group covalently per subunit.

The protein resides in the periplasm. Its function is as follows. Electron acceptor for MDH. Acts in methanol oxidation. In Methylorubrum extorquens (strain ATCC 14718 / DSM 1338 / JCM 2805 / NCIMB 9133 / AM1) (Methylobacterium extorquens), this protein is Cytochrome c-L (moxG).